We begin with the raw amino-acid sequence, 458 residues long: MTLAIIGGGPAGYAAAVSAAQQGRNVLLIDKGKLGGTCLNEGCIPTKSLLESANVLDKIKHADSFGIELPAGAISVDWSKMQSRKQQVVSQLVQGVQYLMKKNQIQVVKGTASFLSERKLLIEGENGKEIREADQVLIASGSEPIELPFAPFDGEWILDSKDALSLSEIPSSLVIVGGGVIGCEYAGLFARLGSQVTIIETADRLIPAEDEDIARLFQEKLEEDGVEVHTSSRLGRVDQTAKTAIWKSGQREFKTKADYVLVAIGRKPRLDGLQLEQAGVDFSPKGIPVNGHMQTNVPHIYACGDAIGGIQLAHAAFHEGIIAASHASGRDVKINEKHVPRCIYTSPEIACIGMTERQARSIYGDVKIGEFSFSANGKALIKQQAEGKVKIMAEPEFGEIVGVSMIGPDVTELIGQAAAIMNGEMTADMAEHFIAAHPTLSETLHEALLSTIGLAVHA.

FAD contacts are provided by residues 30-38 (DKGKLGGTC), Lys47, and Ala112. Cysteines 38 and 43 form a disulfide. NAD(+) is bound by residues 177 to 181 (GGGVI), Glu200, and 263 to 266 (AIGR). Residues Asp305 and Ala313 each coordinate FAD. Residue His437 is the Proton acceptor of the active site.

This sequence belongs to the class-I pyridine nucleotide-disulfide oxidoreductase family. As to quaternary structure, homodimer. FAD is required as a cofactor.

It localises to the cytoplasm. The catalysed reaction is N(6)-[(R)-dihydrolipoyl]-L-lysyl-[protein] + NAD(+) = N(6)-[(R)-lipoyl]-L-lysyl-[protein] + NADH + H(+). The protein operates within ketone degradation; acetoin degradation. The sequence is that of Dihydrolipoyl dehydrogenase (acoL) from Bacillus subtilis (strain 168).